We begin with the raw amino-acid sequence, 262 residues long: Indole-3-glycerol phosphate synthase (262 aa).

It belongs to the TrpC family.

The catalysed reaction is 1-(2-carboxyphenylamino)-1-deoxy-D-ribulose 5-phosphate + H(+) = (1S,2R)-1-C-(indol-3-yl)glycerol 3-phosphate + CO2 + H2O. The protein operates within amino-acid biosynthesis; L-tryptophan biosynthesis; L-tryptophan from chorismate: step 4/5. In Aromatoleum aromaticum (strain DSM 19018 / LMG 30748 / EbN1) (Azoarcus sp. (strain EbN1)), this protein is Indole-3-glycerol phosphate synthase.